Reading from the N-terminus, the 104-residue chain is Large ribosomal subunit protein uL24 (104 aa).

The protein belongs to the universal ribosomal protein uL24 family. As to quaternary structure, part of the 50S ribosomal subunit.

One of two assembly initiator proteins, it binds directly to the 5'-end of the 23S rRNA, where it nucleates assembly of the 50S subunit. Functionally, one of the proteins that surrounds the polypeptide exit tunnel on the outside of the subunit. This chain is Large ribosomal subunit protein uL24, found in Nitrobacter winogradskyi (strain ATCC 25391 / DSM 10237 / CIP 104748 / NCIMB 11846 / Nb-255).